The sequence spans 225 residues: Techylectin-like protein (225 aa).

The region spanning 32–225 (CPSPPLPIDC…WTEIKIKDVK (194 aa)) is the Fibrinogen C-terminal domain. A disulfide bridge links Cys41 with Cys60. Positions 75 to 77 (RGD) match the Cell attachment site motif. Asp164 and Thr170 together coordinate Ca(2+). Cysteines 172 and 185 form a disulfide.

In terms of tissue distribution, expressed by the venom gland.

Its subcellular location is the secreted. Functionally, lectin involved in innate immunity. The sequence is that of Techylectin-like protein from Phoneutria nigriventer (Brazilian armed spider).